The primary structure comprises 91 residues: Molybdopterin synthase sulfur carrier subunit (91 aa).

The residue at position 91 (Gly-91) is a 1-thioglycine; alternate. Gly-91 bears the Glycyl adenylate; alternate mark.

The protein belongs to the MoaD family. MOCS2A subfamily. As to quaternary structure, heterotetramer; composed of 2 small (MOCS2A) and 2 large (MOCS2B) subunits. In terms of processing, C-terminal thiocarboxylation occurs in 2 steps, it is first acyl-adenylated (-COAMP) via the hesA/moeB/thiF part of MOCS3, then thiocarboxylated (-COSH) via the rhodanese domain of MOCS3.

The protein resides in the cytoplasm. Its pathway is cofactor biosynthesis; molybdopterin biosynthesis. Acts as a sulfur carrier required for molybdopterin biosynthesis. Component of the molybdopterin synthase complex that catalyzes the conversion of precursor Z into molybdopterin by mediating the incorporation of 2 sulfur atoms into precursor Z to generate a dithiolene group. In the complex, serves as sulfur donor by being thiocarboxylated (-COSH) at its C-terminus by MOCS3. After interaction with MOCS2B, the sulfur is then transferred to precursor Z to form molybdopterin. The polypeptide is Molybdopterin synthase sulfur carrier subunit (Anopheles gambiae (African malaria mosquito)).